The sequence spans 457 residues: Bifunctional protein GlmU (457 aa).

A pyrophosphorylase region spans residues 1–229 (MYNCAIILAA…YEEIMGVNSR (229 aa)). Residues 8-11 (LAAG), K22, Q73, and 78-79 (GT) contribute to the UDP-N-acetyl-alpha-D-glucosamine site. D103 contacts Mg(2+). Residues G140, E155, N170, and N227 each coordinate UDP-N-acetyl-alpha-D-glucosamine. N227 serves as a coordination point for Mg(2+). The linker stretch occupies residues 230-250 (VQLSEAEIVMRKRINHKHMVN). The interval 251-457 (GVTFIDCEST…WLDKKGLLKK (207 aa)) is N-acetyltransferase. Residues R332 and K350 each contribute to the UDP-N-acetyl-alpha-D-glucosamine site. The active-site Proton acceptor is the H362. UDP-N-acetyl-alpha-D-glucosamine is bound by residues Y365 and N376. Residues 385–386 (NY), A422, and R439 contribute to the acetyl-CoA site.

The protein in the N-terminal section; belongs to the N-acetylglucosamine-1-phosphate uridyltransferase family. In the C-terminal section; belongs to the transferase hexapeptide repeat family. In terms of assembly, homotrimer. Requires Mg(2+) as cofactor.

It is found in the cytoplasm. It catalyses the reaction alpha-D-glucosamine 1-phosphate + acetyl-CoA = N-acetyl-alpha-D-glucosamine 1-phosphate + CoA + H(+). The enzyme catalyses N-acetyl-alpha-D-glucosamine 1-phosphate + UTP + H(+) = UDP-N-acetyl-alpha-D-glucosamine + diphosphate. The protein operates within nucleotide-sugar biosynthesis; UDP-N-acetyl-alpha-D-glucosamine biosynthesis; N-acetyl-alpha-D-glucosamine 1-phosphate from alpha-D-glucosamine 6-phosphate (route II): step 2/2. It functions in the pathway nucleotide-sugar biosynthesis; UDP-N-acetyl-alpha-D-glucosamine biosynthesis; UDP-N-acetyl-alpha-D-glucosamine from N-acetyl-alpha-D-glucosamine 1-phosphate: step 1/1. It participates in bacterial outer membrane biogenesis; LPS lipid A biosynthesis. Catalyzes the last two sequential reactions in the de novo biosynthetic pathway for UDP-N-acetylglucosamine (UDP-GlcNAc). The C-terminal domain catalyzes the transfer of acetyl group from acetyl coenzyme A to glucosamine-1-phosphate (GlcN-1-P) to produce N-acetylglucosamine-1-phosphate (GlcNAc-1-P), which is converted into UDP-GlcNAc by the transfer of uridine 5-monophosphate (from uridine 5-triphosphate), a reaction catalyzed by the N-terminal domain. This chain is Bifunctional protein GlmU, found in Clostridium botulinum (strain Kyoto / Type A2).